The following is a 321-amino-acid chain: Solute carrier family 25 member 33 (321 aa).

Solcar repeat units follow at residues 9–118, 126–213, and 231–315; these read ENTL…AKEQ, NSNI…LKKY, and TSFF…IVYL. The next 6 membrane-spanning stretches (helical) occupy residues 12–32, 49–65, 121–141, 190–210, 233–253, and 298–318; these read LLHL…TCPL, VYYP…AGMV, GIFV…AAFI, LTAS…YESL, FFGL…IAYP, and QIPN…LLED.

Belongs to the mitochondrial carrier (TC 2.A.29) family. As to expression, expressed in the central nervous system. Also expressed in testis and skeletal muscle. Weakly expressed in heart, liver, kidney, prostate, colon and peripheral blood leukocytes.

Its subcellular location is the mitochondrion inner membrane. The catalysed reaction is UTP(in) + UDP(out) = UTP(out) + UDP(in). It catalyses the reaction dUTP(out) + UTP(in) = dUTP(in) + UTP(out). The enzyme catalyses 5-methyl-UTP(out) + UTP(in) = 5-methyl-UTP(in) + UTP(out). It carries out the reaction 5-methyl-UDP(out) + UTP(in) = 5-methyl-UDP(in) + UTP(out). The catalysed reaction is UTP(in) + CTP(out) = UTP(out) + CTP(in). It catalyses the reaction CDP(out) + UTP(in) = CDP(in) + UTP(out). The enzyme catalyses dCTP(out) + UTP(in) = dCTP(in) + UTP(out). It carries out the reaction dCDP(out) + UTP(in) = dCDP(in) + UTP(out). The catalysed reaction is UTP(in) + GTP(out) = UTP(out) + GTP(in). It catalyses the reaction UTP(in) + GDP(out) = UTP(out) + GDP(in). The enzyme catalyses dGTP(out) + UTP(in) = dGTP(in) + UTP(out). It carries out the reaction dGDP(out) + UTP(in) = dGDP(in) + UTP(out). The catalysed reaction is ITP(out) + UTP(in) = ITP(in) + UTP(out). With respect to regulation, inhibited by pyridoxal 5'-phosphate, 4,7-diphenyl-1,10-phenanthroline, tannic acid, and mercurials (mercury dichloride, mersalyl acid, p-hydroxymercuribenzoate). In terms of biological role, mitochondrial transporter that imports/exports pyrimidine nucleotides into and from mitochondria. Selectively transports uridine, thymidine, guanosine, cytosine and inosine (deoxy)nucleoside di- and triphosphates by an antiport mechanism. May import (deoxy)nucleoside triphosphates in exchange for intramitochondrial (deoxy)nucleoside diphosphates, thus providing precursors necessary for de novo synthesis of mitochondrial DNA and RNA while exporting products of their catabolism. Participates in mitochondrial genome maintenance, regulation of mitochondrial membrane potential and mitochondrial respiration. Upon INS or IGF1 stimulation regulates cell growth and proliferation by controlling mitochondrial DNA replication and transcription, the ratio of mitochondria-to nuclear-encoded components of the electron transport chain resulting in control of mitochondrial ROS production. Participates in dendritic cell endocytosis and may associate with mitochondrial oxidative phosphorylation. This Homo sapiens (Human) protein is Solute carrier family 25 member 33 (SLC25A33).